Here is a 108-residue protein sequence, read N- to C-terminus: UPF0102 protein WS0451 (108 aa).

This sequence belongs to the UPF0102 family.

In Wolinella succinogenes (strain ATCC 29543 / DSM 1740 / CCUG 13145 / JCM 31913 / LMG 7466 / NCTC 11488 / FDC 602W) (Vibrio succinogenes), this protein is UPF0102 protein WS0451.